The primary structure comprises 466 residues: Asparagine--tRNA ligase (466 aa).

The protein belongs to the class-II aminoacyl-tRNA synthetase family. As to quaternary structure, homodimer.

It is found in the cytoplasm. The enzyme catalyses tRNA(Asn) + L-asparagine + ATP = L-asparaginyl-tRNA(Asn) + AMP + diphosphate + H(+). This chain is Asparagine--tRNA ligase, found in Shewanella baltica (strain OS185).